A 212-amino-acid polypeptide reads, in one-letter code: Uracil phosphoribosyltransferase (212 aa).

Residues R78, R103, and 130 to 138 (DPMLATGGS) contribute to the 5-phospho-alpha-D-ribose 1-diphosphate site. Residues I193 and 198–200 (GDA) contribute to the uracil site. Residue D199 coordinates 5-phospho-alpha-D-ribose 1-diphosphate.

Belongs to the UPRTase family. Mg(2+) serves as cofactor.

The catalysed reaction is UMP + diphosphate = 5-phospho-alpha-D-ribose 1-diphosphate + uracil. It functions in the pathway pyrimidine metabolism; UMP biosynthesis via salvage pathway; UMP from uracil: step 1/1. With respect to regulation, allosterically activated by GTP. Its function is as follows. Catalyzes the conversion of uracil and 5-phospho-alpha-D-ribose 1-diphosphate (PRPP) to UMP and diphosphate. In Bordetella petrii (strain ATCC BAA-461 / DSM 12804 / CCUG 43448), this protein is Uracil phosphoribosyltransferase.